The primary structure comprises 30 residues: Nattererin-2 (30 aa).

Expressed by the skin glands.

The protein resides in the secreted. In terms of biological role, probably has antibacterial activity. In Physalaemus nattereri (Cuyaba dwarf frog), this protein is Nattererin-2.